The chain runs to 122 residues: Large ribosomal subunit protein uL14 (122 aa).

The protein belongs to the universal ribosomal protein uL14 family. In terms of assembly, part of the 50S ribosomal subunit. Forms a cluster with proteins L3 and L19. In the 70S ribosome, L14 and L19 interact and together make contacts with the 16S rRNA in bridges B5 and B8.

Functionally, binds to 23S rRNA. Forms part of two intersubunit bridges in the 70S ribosome. This Bordetella parapertussis (strain 12822 / ATCC BAA-587 / NCTC 13253) protein is Large ribosomal subunit protein uL14.